The following is a 543-amino-acid chain: Heparanase (543 aa).

The signal sequence occupies residues 1–35 (MLLRSKPALPPPLMLLLLGPLGPLSPGALPRPAQA). Heparan sulfate group contacts are provided by residues 62 to 64 (DAN) and T97. Residues 110-157 (STFEERSYWQSQVNQDICKYGSIPPDVEEKLRLEWPYQEQLLLREHYQ) constitute a propeptide, linker peptide. C127 and C179 are disulfide-bonded. 158–162 (KKFKN) contacts heparan sulfate group. N-linked (GlcNAc...) asparagine glycans are attached at residues N162, N178, N200, and N217. E225 serves as the catalytic Proton donor. N238 carries N-linked (GlcNAc...) asparagine glycosylation. Residues 270–280 (QPRRKTAKMLK), H296, and R303 contribute to the heparan sulfate group site. Positions 288–417 (EVIDSVTWHH…LLFKKLVGTK (130 aa)) are required for heterodimerization with the heparanase 8 kDa subunit. The active-site Nucleophile is the E343. Residues 348 to 350 (YGG) and 389 to 391 (GNY) contribute to the heparan sulfate group site. Cysteines 437 and 542 form a disulfide. An N-linked (GlcNAc...) asparagine glycan is attached at N459. The interval 527–543 (FSYSFFVIRNAKVAACI) is required for transferring proheparanase to the Golgi apparatus, secretion and subsequent enzyme activity and for enhancement of PKB/AKT1 phosphorylation.

Belongs to the glycosyl hydrolase 79 family. In terms of assembly, heterodimer; heterodimer formation between the 8 kDa and the 50 kDa subunits is required for enzyme activity. Interacts with TF; the interaction, inhibited by heparin, enhances the generation of activated factor X and activates coagulation. Interacts with HRG; the interaction is enhanced at acidic pH, partially inhibits binding of HPSE to cell surface receptors and modulates its enzymatic activity. Interacts with SDC1; the interaction enhances the shedding of SDC1. Interacts with HPSE2. Proteolytically processed. The cleavage of the 65 kDa form leads to the generation of a linker peptide, and 8 kDa and 50 kDa products. The active form, the 8/50 kDa heterodimer, is resistant to degradation. Complete removal of the linker peptide appears to be a prerequisite to the complete activation of the enzyme. In terms of processing, N-glycosylated. Glycosylation of the 50 kDa subunit appears to be essential for its solubility. In terms of tissue distribution, highly expressed in placenta and spleen and weakly expressed in lymph node, thymus, peripheral blood leukocytes, bone marrow, endothelial cells, fetal liver and tumor tissues. Also expressed in hair follicles, specifically in both Henle's and Huxley's layers of inner the root sheath (IRS) at anagen phase.

The protein resides in the lysosome membrane. The protein localises to the secreted. It is found in the nucleus. It catalyses the reaction endohydrolysis of (1-&gt;4)-beta-D-glycosidic bonds of heparan sulfate chains in heparan sulfate proteoglycan.. Inhibited by EDTA, laminarin sulfate and, to a lower extent, by heparin and sulfamin and activated by calcium and magnesium. Endoglycosidase that cleaves heparan sulfate proteoglycans (HSPGs) into heparan sulfate side chains and core proteoglycans. Participates in extracellular matrix (ECM) degradation and remodeling. Selectively cleaves the linkage between a glucuronic acid unit and an N-sulfo glucosamine unit carrying either a 3-O-sulfo or a 6-O-sulfo group. Can also cleave the linkage between a glucuronic acid unit and an N-sulfo glucosamine unit carrying a 2-O-sulfo group, but not linkages between a glucuronic acid unit and a 2-O-sulfated iduronic acid moiety. It is essentially inactive at neutral pH but becomes active under acidic conditions such as during tumor invasion and in inflammatory processes. Facilitates cell migration associated with metastasis, wound healing and inflammation. Enhances shedding of syndecans, and increases endothelial invasion and angiogenesis in myelomas. Acts as a procoagulant by increasing the generation of activation factor X in the presence of tissue factor and activation factor VII. Increases cell adhesion to the extracellular matrix (ECM), independent of its enzymatic activity. Induces AKT1/PKB phosphorylation via lipid rafts increasing cell mobility and invasion. Heparin increases this AKT1/PKB activation. Regulates osteogenesis. Enhances angiogenesis through up-regulation of SRC-mediated activation of VEGF. Implicated in hair follicle inner root sheath differentiation and hair homeostasis. The polypeptide is Heparanase (HPSE) (Homo sapiens (Human)).